We begin with the raw amino-acid sequence, 378 residues long: Odorant receptor 33a (378 aa).

Topologically, residues 1 to 33 are cytoplasmic; it reads MDSRRKVRSENLYKTYWLYWRLLGVEGDYPFRR. The chain crosses the membrane as a helical span at residues 34-54; it reads LVDFTITSFITILFPVHLILG. Residues 55-62 are Extracellular-facing; the sequence is MYKKPQIQ. Residues 63–83 traverse the membrane as a helical segment; it reads VFRSLHFTSECLFCSYKFFCF. The Cytoplasmic portion of the chain corresponds to 84 to 127; the sequence is RWKLKEIKTIEGLLQDLDSRVESEEERNYFNQNPSRVARMLSKS. Residues 128 to 148 traverse the membrane as a helical segment; the sequence is YLVAAISAIITATVAGLFSTG. Residues 149–163 are Extracellular-facing; sequence RNLMYLGWFPYDFQA. A helical transmembrane segment spans residues 164–184; sequence TAAIYWISFSYQAIGSSLLIL. The Cytoplasmic segment spans residues 185 to 254; it reads ENLANDSYPP…LLRSTLHLSQ (70 aa). The helical transmembrane segment at 255–275 threads the bilayer; sequence LGQFLSSGINISITLINILFF. Over 276–285 the chain is Extracellular; it reads AENNFAMLYY. A helical transmembrane segment spans residues 286–306; the sequence is AVFFAAMLIELFPSCYYGILM. Residues 307-355 are Cytoplasmic-facing; it reads TMEFDKLPYAIFSSNWLKMDKRYNRSLIILMQLTLVPVNIKAGGIVGID. The helical transmembrane segment at 356–376 threads the bilayer; it reads MSAFFATVRMAYSFYTLALSF. Residues 377–378 lie on the Extracellular side of the membrane; sequence RV.

This sequence belongs to the insect chemoreceptor superfamily. Heteromeric odorant receptor channel (TC 1.A.69) family. Or2a subfamily. As to quaternary structure, interacts with Orco. Complexes exist early in the endomembrane system in olfactory sensory neurons (OSNs), coupling these complexes to the conserved ciliary trafficking pathway. In terms of tissue distribution, expressed in 1-2 cells on the distal edge of the antenna but not the maxillary palp.

Its subcellular location is the cell membrane. Functionally, odorant receptor which mediates acceptance or avoidance behavior, depending on its substrates. The odorant receptor repertoire encodes a large collection of odor stimuli that vary widely in identity, intensity, and duration. May form a complex with Orco to form odorant-sensing units, providing sensitive and prolonged odorant signaling and calcium permeability. The polypeptide is Odorant receptor 33a (Or33a) (Drosophila melanogaster (Fruit fly)).